A 134-amino-acid polypeptide reads, in one-letter code: D-ribose pyranase (134 aa).

His-20 acts as the Proton donor in catalysis. Substrate is bound by residues Asp-28, His-101, and 123–125; that span reads YSN.

Belongs to the RbsD / FucU family. RbsD subfamily. In terms of assembly, homodecamer.

The protein localises to the cytoplasm. The enzyme catalyses beta-D-ribopyranose = beta-D-ribofuranose. Its pathway is carbohydrate metabolism; D-ribose degradation; D-ribose 5-phosphate from beta-D-ribopyranose: step 1/2. Its function is as follows. Catalyzes the interconversion of beta-pyran and beta-furan forms of D-ribose. The chain is D-ribose pyranase from Pseudomonas syringae pv. tomato (strain ATCC BAA-871 / DC3000).